Reading from the N-terminus, the 649-residue chain is Cysteine-rich receptor-like protein kinase 2 (649 aa).

Residues 1 to 29 form the signal peptide; that stretch reads MKKEPVHILPLYLPCLLMFLLSSLRQITG. Residues 30-258 lie on the Extracellular side of the membrane; sequence DARARAVKVT…IPRNGRSRGS (229 aa). Gnk2-homologous domains are found at residues 33-134 and 139-245; these read ARAV…NYSF and KGPE…DQDF. Residues Asn47, Asn131, Asn149, Asn154, and Asn214 are each glycosylated (N-linked (GlcNAc...) asparagine). A helical transmembrane segment spans residues 259 to 279; sequence VVVIVVSVLSSVVVFMIGVAV. Over 280-649 the chain is Cytoplasmic; the sequence is SVYICKRRTI…TVSQSSFYGR (370 aa). The 284-residue stretch at 325-608 folds into the Protein kinase domain; that stretch reads FDNANKLGQG…HMLKNKEEVL (284 aa). Residues 331 to 339 and Lys353 contribute to the ATP site; that span reads LGQGGFGTV. Phosphotyrosine is present on Tyr398. The active-site Proton acceptor is Asp450. Residues Ser454 and Ser483 each carry the phosphoserine modification. Phosphothreonine occurs at positions 484 and 489. Phosphotyrosine is present on Tyr497.

Belongs to the protein kinase superfamily. Ser/Thr protein kinase family. CRK subfamily.

It is found in the membrane. The enzyme catalyses L-seryl-[protein] + ATP = O-phospho-L-seryl-[protein] + ADP + H(+). It catalyses the reaction L-threonyl-[protein] + ATP = O-phospho-L-threonyl-[protein] + ADP + H(+). This chain is Cysteine-rich receptor-like protein kinase 2 (CRK2), found in Arabidopsis thaliana (Mouse-ear cress).